A 505-amino-acid polypeptide reads, in one-letter code: Exoglucanase 1 (505 aa).

The N-terminal stretch at 1-17 (MYRKLAVISAFLAAARA) is a signal peptide. The residue at position 18 (Q18) is a Pyrrolidone carboxylic acid. Residues 18 to 449 (QQVCTQQAET…GSTGGNTGSN (432 aa)) form a catalytic region. Disulfide bonds link C21–C88, C36–C41, C66–C87, and C77–C83. 2 N-linked (GlcNAc...) asparagine glycosylation sites follow: N93 and N126. Cystine bridges form between C151–C410, C185–C223, C189–C222, C243–C269, C251–C256, and C274–C344. The active-site Nucleophile is E225. The active-site Proton donor/acceptor is E230. Residues N283 and N397 are each glycosylated (N-linked (GlcNAc...) asparagine). Disordered stretches follow at residues 399-423 (TAST…VEAQ) and 440-472 (GSTG…ATQT). Positions 409–423 (SCSTSSGVPAQVEAQ) are enriched in polar residues. The segment covering 447–470 (GSNPPGTSTTRAPPSSTGSSPTAT) has biased composition (low complexity). The interval 450–468 (PPGTSTTRAPPSSTGSSPT) is linker. The CBM1 domain occupies 469–505 (ATQTHYGQCGGTGWTGPTRCASGYTCQVLNPFYSQCL).

It belongs to the glycosyl hydrolase 7 (cellulase C) family. In terms of processing, O-glycosylated. O-glycosylation of the cellulase linker provides protection from proteolysis. Linker glycans also contribute to binding affinity of cellobiohydrolases to cellulose.

The protein resides in the secreted. The enzyme catalyses Hydrolysis of (1-&gt;4)-beta-D-glucosidic linkages in cellulose and cellotetraose, releasing cellobiose from the non-reducing ends of the chains.. In terms of biological role, exocellobiohydrolases (CBH) that catalyzes the hydrolysis of 1,4-beta-D-glucosidic bonds in cellulose to release the disaccharide cellobiose. The degradation of cellulose involves an interplay between different cellulolytic enzymes. Hydrolysis starts with endoglucanases (EGs), which cut internal beta-1,4-glucosidic bonds in cellulose to reduce the polymerization degree of the substrate and create new chain ends for exocellobiohydrolases (CBHs). The CBHs release the disaccharide cellobiose from the non-reducing end of the cellulose polymer chain. Finally, beta-1,4-glucosidases hydrolyze the cellobiose and other short cello-oligosaccharides into glucose units. This Trichoderma harzianum (Hypocrea lixii) protein is Exoglucanase 1 (cbh1).